Reading from the N-terminus, the 381-residue chain is Tafazzin (381 aa).

Residues 1-25 are Mitochondrial intermembrane-facing; that stretch reads MSFRDVLERGDEFLEAYPRRSPLWR. The stretch at 26-47 is an intramembrane region; the sequence is FLSYSTSLLTFGVSKLLLFTCY. The Mitochondrial intermembrane segment spans residues 48-381; the sequence is NVKLNGFEKL…PEGKPKGKDD (334 aa). Residues 77–82 carry the HXXXXD motif motif; it reads HMSMVD. The tract at residues 215-232 is required for membrane insertion; the sequence is LEATKPPIVVPIFATGFE.

Belongs to the taffazin family.

Its subcellular location is the mitochondrion outer membrane. The protein resides in the mitochondrion inner membrane. The enzyme catalyses 1'-[1,2-diacyl-sn-glycero-3-phospho],3'-[1-acyl-sn-glycero-3-phospho]-glycerol + a 1,2-diacyl-sn-glycero-3-phosphocholine = a cardiolipin + a 1-acyl-sn-glycero-3-phosphocholine. It catalyses the reaction 1,2-di-(9Z,12Z-octadecadienoyl)-sn-glycero-3-phosphocholine + 1'-[1,2-di-(9Z,12Z-octadecadienoyl)-sn-glycero-3-phospho]-3'-[1-(9Z,12Z-octadecadienoyl)-sn-glycero-3-phospho]-glycerol = 1-(9Z,12Z)-octadecadienoyl-sn-glycero-3-phosphocholine + 1',3'-bis-[1,2-di-(9Z,12Z-octadecadienoyl)-sn-glycero-3-phospho]-glycerol. The catalysed reaction is 1'-[1,2-di-(9Z-octadecenoyl)-sn-glycero-3-phospho]-3'-[1-(9Z-octadecenoyl)-2-hexadecanoyl-sn-glycero-3-phospho]-glycerol + 1-hexadecanoyl-sn-glycero-3-phosphocholine = 1'-[1,2-di-(9Z-octadecenoyl)-sn-glycero-3-phospho]-3'-[1-(9Z-octadecenoyl)-sn-glycero-3-phospho]-glycerol + 1,2-dihexadecanoyl-sn-glycero-3-phosphocholine. It carries out the reaction 1'-[1,2-di-(9Z-octadecenoyl)-sn-glycero-3-phospho]-3'-[1-(9Z-octadecenoyl)-2-(9Z-hexadecenoyl)-sn-glycero-3-phospho]-glycerol + 1-(9Z-hexadecenoyl)-sn-glycero-3-phosphocholine = 1,2-di-(9Z-hexadecenoyl)-sn-glycero-3-phosphocholine + 1'-[1,2-di-(9Z-octadecenoyl)-sn-glycero-3-phospho]-3'-[1-(9Z-octadecenoyl)-sn-glycero-3-phospho]-glycerol. The enzyme catalyses 1',3'-bis[1,2-di-(9Z-octadecenoyl)-sn-glycero-3-phospho]-glycerol + 1-(9Z-octadecenoyl)-sn-glycero-3-phosphocholine = 1'-[1,2-di-(9Z-octadecenoyl)-sn-glycero-3-phospho]-3'-[1-(9Z-octadecenoyl)-sn-glycero-3-phospho]-glycerol + 1,2-di-(9Z-octadecenoyl)-sn-glycero-3-phosphocholine. It catalyses the reaction 1'-[1,2-di-(9Z-octadecenoyl)-sn-glycero-3-phospho]-3'-[1-(9Z-octadecenoyl)-2-(9Z,12Z-octadecadienoyl)-sn-glycero-3-phospho]-glycerol + 1-(9Z,12Z)-octadecadienoyl-sn-glycero-3-phosphocholine = 1,2-di-(9Z,12Z-octadecadienoyl)-sn-glycero-3-phosphocholine + 1'-[1,2-di-(9Z-octadecenoyl)-sn-glycero-3-phospho]-3'-[1-(9Z-octadecenoyl)-sn-glycero-3-phospho]-glycerol. The catalysed reaction is 1'-[1,2-di-(9Z-octadecenoyl)-sn-glycero-3-phospho]-3'-[1-(9Z-octadecenoyl)-2-(9Z-hexadecenoyl)-sn-glycero-3-phospho]-glycerol + 1-hexadecanoyl-sn-glycero-3-phosphocholine = 1-hexadecanoyl-2-(9Z-hexadecenoyl)-sn-glycero-3-phosphocholine + 1'-[1,2-di-(9Z-octadecenoyl)-sn-glycero-3-phospho]-3'-[1-(9Z-octadecenoyl)-sn-glycero-3-phospho]-glycerol. It carries out the reaction 1'-[1,2-di-(9Z-octadecenoyl)-sn-glycero-3-phospho]-3'-[1-(9Z-octadecenoyl)-2-hexadecanoyl-sn-glycero-3-phospho]-glycerol + 1-(9Z-hexadecenoyl)-sn-glycero-3-phosphocholine = 1-(9Z-hexadecenoyl)-2-hexadecanoyl-sn-glycero-3-phosphocholine + 1'-[1,2-di-(9Z-octadecenoyl)-sn-glycero-3-phospho]-3'-[1-(9Z-octadecenoyl)-sn-glycero-3-phospho]-glycerol. The enzyme catalyses 2 1'-[1,2-diacyl-sn-glycero-3-phospho],3'-[1-acyl-sn-glycero-3-phospho]-glycerol = 1',3'-bis-[1-acyl-sn-glycero-3-phospho]-glycerol + a cardiolipin. It catalyses the reaction 2 1'-[1,2-di-(9Z-octadecenoyl)-sn-glycero-3-phospho]-3'-[1-(9Z-octadecenoyl)-sn-glycero-3-phospho]-glycerol = 1',3'-bis-[1-(9Z-octadecenoyl)-sn-glycero-3-phospho]-glycerol + 1',3'-bis[1,2-di-(9Z-octadecenoyl)-sn-glycero-3-phospho]-glycerol. The catalysed reaction is 1,2-di-(9Z-hexadecenoyl)-sn-glycero-3-phosphocholine + 1-hexadecanoyl-sn-glycero-3-phosphocholine = 1-hexadecanoyl-2-(9Z-hexadecenoyl)-sn-glycero-3-phosphocholine + 1-(9Z-hexadecenoyl)-sn-glycero-3-phosphocholine. It carries out the reaction 1'-[1,2-di-(9Z,12Z-octadecadienoyl)-sn-glycero-3-phospho]-3'-[1-(9Z,12Z-octadecadienoyl)-sn-glycero-3-phospho]-glycerol + 1,2-di-(9Z-octadecenoyl)-sn-glycero-3-phosphocholine = 1'-[1,2-di-(9Z,12Z-octadecadienoyl)-sn-glycero-3-phospho]-3'-[1-(9Z,12Z-octadecadienoyl)-2-(9Z-octadecenoyl)-sn-glycero-3-phospho]-glycerol + 1-(9Z-octadecenoyl)-sn-glycero-3-phosphocholine. It functions in the pathway phospholipid metabolism. In terms of biological role, acyltransferase required to remodel newly synthesized phospholipid cardiolipin (1',3'-bis-[1,2-diacyl-sn-glycero-3-phospho]-glycerol or CL), a key component of the mitochondrial inner membrane, with tissue specific acyl chains necessary for adequate mitochondrial function. Its role in cellular physiology is to improve mitochondrial performance. CL is critical for the coassembly of lipids and proteins in mitochondrial membranes, for instance, remodeling of the acyl groups of CL in the mitochondrial inner membrane affects the assembly and stability of respiratory chain complex IV and its supercomplex forms. Catalyzes the transacylation between phospholipids and lysophospholipids, with the highest rate being between phosphatidylcholine (1,2-diacyl-sn-glycero-3-phosphocholine or PC) and CL. Catalyzes both 1-acyl-sn-glycero-3-phosphocholine (lysophosphatidylcholine or LPC) reacylation and PC-CL transacylation, that means, it exchanges acyl groups between CL and PC by a combination of forward and reverse transacylations. Also catalyzes transacylations between other phospholipids such as phosphatidylethanolamine (1,2-diacyl-sn-glycero-3-phosphoethanolamine or PE) and CL, between PC and PE, and between PC and phosphatidate (1,2-diacyl-sn-glycero-3-phosphate or PA), although at lower rate. Not regiospecific, it transfers acyl groups into any of the sn-1 and sn-2 positions of the monolysocardiolipin (MLCL), which is an important prerequisite for uniformity and symmetry in CL acyl distribution. Cannot transacylate dilysocardiolipin (DLCL), thus, the role of MLCL is limited to that of an acyl acceptor. CoA-independent, it can reshuffle molecular species within a single phospholipid class. Redistributes fatty acids between MLCL, CL, and other lipids, which prolongs the half-life of CL. Its action is completely reversible, which allows for cyclic changes, such as fission and fusion or bending and flattening of the membrane. Hence, by contributing to the flexibility of the lipid composition, it plays an important role in the dynamics of mitochondria membranes. Essential for the final stage of spermatogenesis, spermatid individualization. Required for the initiation of mitophagy. This Saccharomyces cerevisiae (strain ATCC 204508 / S288c) (Baker's yeast) protein is Tafazzin (TAZ1).